The primary structure comprises 654 residues: MAQISLTFPDGNARDFDAGVTPAEVAASISTSLGKKAISATVNGAHHDLQWPIDADASIAIHTLKDDAQALELIRHDCAHIMARAVQEIWPDVKVTIGPVIENGFYYDFDRAEPFTPEDLGAIEAKMKEIINARDPVRTEVWDRPRAIAHYEANGEPYKVELIEAIPGNEPLRMYWHGDWQDLCRGPHLQHTGQVPADSFKLMSVAGAYWRGDSSRPMLQRIYGVAFQNRDALKKHLHMLEEAAKRDHRKLGREMNLFHMQEEAPGQVFWHPNGWTVYTTLQDYMRRRQRENGYVEVNTPQVVDRKLWEASGHWDKYQENMFIVEVDEEHAREKAINALKPMNCPCHVQVYNQGLKSYRDLPLRMAEFGACNRYEPSGALHGLMRVRGFTQDDAHIFCTEDQIQDETARFIRMLSTIYRDLGFESFDIKFSTRPEVRAGSDAVWDKAEAALEAAIRTVTDDFELDPGEGAFYGPKLDFKLTDAIGREWQLGTFQADFVLPERLDATYIGEDGAKHRPVMLHRAILGSFERFLGILIENFAGKLPFWLAPRQVVVASIISEADDYVREVVAALTRAGIRAEADIRNEKINYKVREHSVGKVPVILAVGRREMEERTVTLRRLGEKQTSVVGLDALVADLAAEATPPDQRPDQPAV.

A TGS domain is found at 1-63 (MAQISLTFPD…DADASIAIHT (63 aa)). Residues 247–544 (DHRKLGREMN…LIENFAGKLP (298 aa)) are catalytic. 3 residues coordinate Zn(2+): cysteine 344, histidine 395, and histidine 521.

It belongs to the class-II aminoacyl-tRNA synthetase family. Homodimer. The cofactor is Zn(2+).

Its subcellular location is the cytoplasm. It catalyses the reaction tRNA(Thr) + L-threonine + ATP = L-threonyl-tRNA(Thr) + AMP + diphosphate + H(+). In terms of biological role, catalyzes the attachment of threonine to tRNA(Thr) in a two-step reaction: L-threonine is first activated by ATP to form Thr-AMP and then transferred to the acceptor end of tRNA(Thr). Also edits incorrectly charged L-seryl-tRNA(Thr). The polypeptide is Threonine--tRNA ligase (Dinoroseobacter shibae (strain DSM 16493 / NCIMB 14021 / DFL 12)).